We begin with the raw amino-acid sequence, 252 residues long: O-methyltransferase hkm8 (252 aa).

S-adenosyl-L-methionine is bound by residues Glu73, 75–76 (GT), Ser81, and Asp100.

Belongs to the class I-like SAM-binding methyltransferase superfamily. Cation-dependent O-methyltransferase family.

Its pathway is secondary metabolite biosynthesis. O-methyltransferase; part of the gene cluster that mediates the biosynthesis of hancockiamides, an unusual new family of N-cinnamoylated piperazines. The NRPS hkm10 and the NmrA-like reductase hkm9 are proposed to convert two molecules of L-Phe to the intermediary piperazine called xenocockiamide A. Xenocockiamide A is then converted to hancockiamide D via a series of hydroxylations and O-methylations. The tyrosinase hkm6 may catalyze an aromatic hydroxylation, then the 2-oxoglutarate-dependent Fe(II) dioxygenase hkm4 and the FAD-dependent phenol hydroxylase hkm7 may catalyze consecutive hydroxylations to install 2 more hydroxy groups, and the methyltransferase hkm8 probably catalyzes two methylations using 2 molecules of S-adenosyl-L-methionine (SAM). The NRPS hkm11 activates and transfers trans-cinnamate supplied by the PAL hkm12 to hancockiamide D and produces hancockiamide A. NRPS Hkm11 has the flexibility to tolerate the bulky hancockiamide G as a substrate and the absence of the acetyl-transferase hkm3 opens up the opportunity for hkm11 to introduce a second N-cinnamoyl moiety. The cytochrome P450 monooxygenase hkm5 catalyzes the methylenedioxy bridge formation, converting hancockiamide A into hancockiamide G. Hkm5 can also convert hancockiamide B into hancockiamide C, and hancockiamide D into hancockiamide H. The N-acetyltransferase hkm3 finally transfers an acetyl group to 1-N of piperazine, converting hancockiamide A into hancockiamide B and hancockiamide G into hancockiamide C. This chain is O-methyltransferase hkm8, found in Aspergillus hancockii.